The sequence spans 161 residues: MAGFIGKELHALDEKGRLMIPARFRRDFVRGNGVVAEDKRKGSDGSGDGIYLYLMKAPDGSLELYEPDVWQEMKKSLAGLSDFNPEERLLKTMIYESLDVVTVDRQGRIPLTKEFLDHAGIMKELVIIGADTKMVIWEPERLASVLHDNAGRFTALAGRYF.

2 SpoVT-AbrB domains span residues 7 to 69 (KELH…EPDV) and 98 to 141 (LDVV…EPER).

It belongs to the MraZ family. As to quaternary structure, forms oligomers.

The protein localises to the cytoplasm. The protein resides in the nucleoid. This is Transcriptional regulator MraZ from Chlorobium limicola (strain DSM 245 / NBRC 103803 / 6330).